Reading from the N-terminus, the 1863-residue chain is MSQKSWIESTLTKRECVYIIPSSKDPHRCLPGCQICQQLVRCFCGRLVKQHACFTASLAMKYSDVKLGEHFNQAIEEWSVEKHTEQSPTDAYGVINFQGGSHSYRAKYVRLSYDTKPEIILQLLLKEWQMELPKLVISVHGGMQKFELHPRIKQLLGKGLIKAAVTTGAWILTGGVNTGVAKHVGDALKEHASRSSRKICTIGIAPWGVIENRNDLVGRDVVAPYQTLLNPLSKLNVLNNLHSHFILVDDGTVGKYGAEVRLRRELEKTINQQRIHARIGQGVPVVALIFEGGPNVILTVLEYLQESPPVPVVVCEGTGRAADLLAYIHKQTEEGGNLPDAAEPDIISTIKKTFNFGQSEAVHLFQTMMECMKKKELITVFHIGSEDHQDIDVAILTALLKGTNASAFDQLILTLAWDRVDIAKNHVFVYGQQWLVGSLEQAMLDALVMDRVSFVKLLIENGVSMHKFLTIPRLEELYNTKQGPTNPMLFHLIRDVKQGNLPPGYKITLIDIGLVIEYLMGGTYRCTYTRKRFRLIYNSLGGNNRRSGRNTSSSTPQLRKSHETFGNRADKKEKMRHNHFIKTAQPYRPKMDASMEEGKKKRTKDEIVDIDDPETKRFPYPLNELLIWACLMKRQVMARFLWQHGEESMAKALVACKIYRSMAYEAKQSDLVDDTSEELKQYSNDFGQLAVELLEQSFRQDETMAMKLLTYELKNWSNSTCLKLAVSSRLRPFVAHTCTQMLLSDMWMGRLNMRKNSWYKVILSILVPPAILMLEYKTKAEMSHIPQSQDAHQMTMEDSENNFHNITEEIPMEVFKEVKILDSSDGKNEMEIHIKSKKLPITRKFYAFYHAPIVKFWFNTLAYLGFLMLYTFVVLVKMEQLPSVQEWIVIAYIFTYAIEKVREVFMSEAGKISQKIKVWFSDYFNVSDTIAIISFFVGFGLRFGAKWNYINAYDNHVFVAGRLIYCLNIIFWYVRLLDFLAVNQQAGPYVMMIGKMVANMFYIVVIMALVLLSFGVPRKAILYPHEEPSWSLAKDIVFHPYWMIFGEVYAYEIDVCANDSTLPTICGPGTWLTPFLQAVYLFVQYIIMVNLLIAFFNNVYLQVKAISNIVWKYQRYHFIMAYHEKPVLPPPLIILSHIVSLFCCVCKRRKKDKTSDGPKLFLTEEDQKKLHDFEEQCVEMYFDEKDDKFNSGSEERIRVTFERVEQMSIQIKEVGDRVNYIKRSLQSLDSQIGHLQDLSALTVDTLKTLTAQKASEASKVHNEITRELSISKHLAQNLIDDVPVRPLWKKPSAVNTLSSSLPQGDRESNNPFLCNIFMKDEKDPQYNLFGQDLPVIPQRKEFNIPEAGSSCGALFPSAVSPPELRQRRHGVEMLKIFNKNQKLGSSPNSSPHMSSPPTKFSVSTPSQPSCKSHLESTTKDQEPIFYKAAEGDNIEFGAFVGHRDSMDLQRFKETSNKIRELLSNDTPENTLKHVGAAGYSECCKTSTSLHSVQAESCSRRASTEDSPEVDSKAALLPDWLRDRPSNREMPSEGGTLNGLASPFKPVLDTNYYYSAVERNNLMRLSQSIPFVPVPPRGEPVTVYRLEESSPSILNNSMSSWSQLGLCAKIEFLSKEEMGGGLRRAVKVLCTWSEHDILKSGHLYIIKSFLPEVINTWSSIYKEDTVLHLCLREIQQQRAAQKLTFAFNQMKPKSIPYSPRFLEVFLLYCHSAGQWFAVEECMTGEFRKYNNNNGDEIIPTNTLEEIMLAFSHWTYEYTRGELLVLDLQGVGENLTDPSVIKAEEKRSCDMVFGPANLGEDAIKNFRAKHHCNSCCRKLKLPDLKRNDYTPDKIIFPQDESSDLNLQSGNSTKESEATNSVRLML.

N-acetylmethionine is present on M1. At 1 to 850 (MSQKSWIEST…ITRKFYAFYH (850 aa)) the chain is on the cytoplasmic side. A Phosphoserine modification is found at S101. Over residues 544–555 (NRRSGRNTSSST) the composition is skewed to low complexity. Residues 544–574 (NRRSGRNTSSSTPQLRKSHETFGNRADKKEK) form a disordered region. Residues 560 to 573 (KSHETFGNRADKKE) are compositionally biased toward basic and acidic residues. A helical transmembrane segment spans residues 851–876 (APIVKFWFNTLAYLGFLMLYTFVVLV). Over 877 to 882 (KMEQLP) the chain is Extracellular. A helical transmembrane segment spans residues 883–904 (SVQEWIVIAYIFTYAIEKVREV). The Cytoplasmic portion of the chain corresponds to 905–923 (FMSEAGKISQKIKVWFSDY). The helical transmembrane segment at 924–943 (FNVSDTIAIISFFVGFGLRF) threads the bilayer. The Extracellular portion of the chain corresponds to 944-956 (GAKWNYINAYDNH). The chain crosses the membrane as a helical span at residues 957 to 980 (VFVAGRLIYCLNIIFWYVRLLDFL). Topologically, residues 981–999 (AVNQQAGPYVMMIGKMVAN) are cytoplasmic. The helical transmembrane segment at 1000-1023 (MFYIVVIMALVLLSFGVPRKAILY) threads the bilayer. Over 1024–1025 (PH) the chain is Extracellular. The pore-forming intramembrane region spans 1026-1066 (EEPSWSLAKDIVFHPYWMIFGEVYAYEIDVCANDSTLPTIC). Residues 1067–1069 (GPG) lie on the Extracellular side of the membrane. A helical transmembrane segment spans residues 1070-1098 (TWLTPFLQAVYLFVQYIIMVNLLIAFFNN). Over 1099–1863 (VYLQVKAISN…EATNSVRLML (765 aa)) the chain is Cytoplasmic. Residues C1143, C1144, and C1146 are each lipidated (S-palmitoyl cysteine). T1163 is modified (phosphothreonine). S1191, S1193, S1224, S1255, and S1258 each carry phosphoserine. Residues 1198-1250 (RVTFERVEQMSIQIKEVGDRVNYIKRSLQSLDSQIGHLQDLSALTVDTLKTLT) are a coiled coil. T1265 is subject to Phosphothreonine. Phosphoserine occurs at positions 1300, 1357, 1360, 1385, 1386, 1389, 1394, 1395, and 1403. Residues 1380 to 1418 (NQKLGSSPNSSPHMSSPPTKFSVSTPSQPSCKSHLESTT) form a disordered region. Over residues 1385-1397 (SSPNSSPHMSSPP) the composition is skewed to low complexity. A compositionally biased stretch (polar residues) spans 1398 to 1410 (TKFSVSTPSQPSC). T1404 carries the post-translational modification Phosphothreonine. 2 positions are modified to phosphoserine: S1406 and S1445. The residue at position 1454 (T1454) is a Phosphothreonine. S1455 carries the post-translational modification Phosphoserine. A phosphothreonine mark is found at T1466 and T1470. Residues S1491, S1498, S1502, S1511, S1525, and S1531 each carry the phosphoserine modification. The interval 1498–1539 (SRRASTEDSPEVDSKAALLPDWLRDRPSNREMPSEGGTLNGL) is disordered. The span at 1519–1530 (WLRDRPSNREMP) shows a compositional bias: basic and acidic residues. At T1535 the chain carries Phosphothreonine. At S1541 the chain carries Phosphoserine. The residue at position 1549 (T1549) is a Phosphothreonine. Phosphoserine occurs at positions 1565 and 1567. T1581 carries the post-translational modification Phosphothreonine. The Alpha-type protein kinase domain maps to 1592–1822 (ILNNSMSSWS…CCRKLKLPDL (231 aa)). Residues S1596 and S1613 each carry the phosphoserine modification. Residues G1619, G1620, L1621, R1622, and K1646 each contribute to the ADP site. S1658 is modified (phosphoserine). T1683 carries the post-translational modification Phosphothreonine. ADP is bound by residues E1718, E1719, and M1721. H1751 contributes to the Zn(2+) binding site. The active-site Proton acceptor is the D1765. D1775 is a binding site for ADP. Position 1777 is a phosphoserine (S1777). H1808, C1810, and C1814 together coordinate Zn(2+). T1828 bears the Phosphothreonine mark. The disordered stretch occupies residues 1838-1863 (ESSDLNLQSGNSTKESEATNSVRLML). The segment covering 1841–1863 (DLNLQSGNSTKESEATNSVRLML) has biased composition (polar residues). Phosphoserine is present on residues S1846, S1849, and S1858.

This sequence in the C-terminal section; belongs to the protein kinase superfamily. Alpha-type protein kinase family. ALPK subfamily. In the N-terminal section; belongs to the transient receptor (TC 1.A.4) family. LTrpC subfamily. TRPM7 sub-subfamily. As to quaternary structure, homodimer. Homotetramer. Forms heteromers with TRPM6; heteromeric channels are functionally different from the homomeric channels. Interacts with PLCB1. It depends on Zn(2+) as a cofactor. In terms of processing, palmitoylated; palmitoylation at Cys-1143, Cys-1144 and Cys-1146 promotes TRPM7 trafficking from the Golgi to the surface membrane. Post-translationally, autophosphorylated; autophosphorylation regulates TRPM7 kinase activity towards its substrates. The C-terminal kinase domain can be cleaved from the channel segment in a cell-type-specific fashion. TRPM7 is cleaved by caspase-8, dissociating the kinase from the ion-conducting pore. The cleaved kinase fragments (M7CKs) can translocate to the cell nucleus and binds chromatin-remodeling complex proteins in a Zn(2+)-dependent manner to ultimately phosphorylate specific Ser/Thr residues of histones. As to expression, found to be expressed in brain and skeletal muscle, with stronger signals in kidney, heart, liver and spleen.

The protein resides in the cell membrane. Its subcellular location is the cytoplasmic vesicle membrane. The protein localises to the nucleus. The enzyme catalyses L-seryl-[protein] + ATP = O-phospho-L-seryl-[protein] + ADP + H(+). The catalysed reaction is L-threonyl-[protein] + ATP = O-phospho-L-threonyl-[protein] + ADP + H(+). It carries out the reaction Mg(2+)(in) = Mg(2+)(out). It catalyses the reaction Ca(2+)(in) = Ca(2+)(out). The enzyme catalyses Zn(2+)(in) = Zn(2+)(out). With respect to regulation, channel displays constitutive activity. Channel activity is negatively regulated by cytosolic Mg(2+), Mg-ATP and low intracellular pH. Resting free cytosolic Mg(2+) and Mg-ATP concentrations seem to be sufficient to block native TRPM7 channel activity. TRPM7 channel activity is highly dependent on membrane levels of phosphatidylinositol 4,5 bisphosphate (PIP2). PIP2 hydrolysis negatively regulates TRPM7 channel activity. TRPM7 kinase activity does not affect channel activity. The kinase activity is controlled through the autophosphorylation of a serine/threonine-rich region located N-terminal to the catalytic domain. Functionally, bifunctional protein that combines an ion channel with an intrinsic kinase domain, enabling it to modulate cellular functions either by conducting ions through the pore or by phosphorylating downstream proteins via its kinase domain. The channel is highly permeable to divalent cations, specifically calcium (Ca2+), magnesium (Mg2+) and zinc (Zn2+) and mediates their influx. Controls a wide range of biological processes such as Ca2(+), Mg(2+) and Zn(2+) homeostasis, vesicular Zn(2+) release channel and intracellular Ca(2+) signaling, embryonic development, immune responses, cell motility, proliferation and differentiation. The C-terminal alpha-kinase domain autophosphorylates cytoplasmic residues of TRPM7. TRPM7 phosphorylates SMAD2, suggesting that TRPM7 kinase may play a role in activating SMAD signaling pathways. In vitro, TRPM7 kinase phosphorylates ANXA1 (annexin A1), myosin II isoforms and a variety of proteins with diverse cellular functions. The cleaved channel exhibits substantially higher current and potentiates Fas receptor signaling. Its function is as follows. The C-terminal kinase domain can be cleaved from the channel segment in a cell-type-specific fashion. In immune cells, the TRPM7 kinase domain is clipped from the channel domain by caspases in response to Fas-receptor stimulation. The cleaved kinase fragments can translocate to the nucleus, and bind chromatin-remodeling complex proteins in a Zn(2+)-dependent manner to ultimately phosphorylate specific Ser/Thr residues of histones known to be functionally important for cell differentiation and embryonic development. In Mus musculus (Mouse), this protein is Transient receptor potential cation channel subfamily M member 7 (Trpm7).